A 158-amino-acid chain; its full sequence is uncharacterized protein (158 aa).

One can recognise an HTH asnC-type domain in the interval 12-73 (LDEIDRAILR…LINPFKAGYE (62 aa)). The H-T-H motif DNA-binding region spans 31 to 50 (YSEISRRINVPESTVRARVN).

This is an uncharacterized protein from Pyrococcus horikoshii (strain ATCC 700860 / DSM 12428 / JCM 9974 / NBRC 100139 / OT-3).